We begin with the raw amino-acid sequence, 354 residues long: MRATPLAASADVSCRKKPLEFDDNIDAKCPVLKRVRDEPEPGPLPSLLPPSPPPASDLSPAVAPATRLGPYILLEREQGSCSYRALHCPTGTEYTCKVYPASEAQAVLAPYARLPTHQHVARPTEVLLGSRLLYIFFTKTHGDLHSLVRSRRGIPESEAAGLFRQMASAVAHCHKHGLVLRDLKLRRFVFSNCERTKLVLENLEDACVMTGSDDSLWDKHACPAYVGPEILSSRPSYSGKAADVWSLGVALFTMLAGRYPFHDSEPVLLFGKIRRGTFALPEGLSAPARCLIRCLLRKEPSERLVALGILLHPWLREDHGRVSPPQSDRREMDQVVPDGPQLEEAEEGEVGLYG.

An interaction with DDIT3/CHOP region spans residues 1-127 (MRATPLAASA…QHVARPTEVL (127 aa)). The interval 36–61 (RDEPEPGPLPSLLPPSPPPASDLSPA) is disordered. Positions 41–55 (PGPLPSLLPPSPPPA) are enriched in pro residues. A Protein kinase domain is found at 68-315 (LGPYILLERE…ALGILLHPWL (248 aa)). Residues 320-333 (GRVSPPQSDRREMD) show a composition bias toward basic and acidic residues. Positions 320 to 354 (GRVSPPQSDRREMDQVVPDGPQLEEAEEGEVGLYG) are disordered. Acidic residues predominate over residues 341 to 354 (QLEEAEEGEVGLYG).

The protein belongs to the protein kinase superfamily. CAMK Ser/Thr protein kinase family. Tribbles subfamily. Interacts with AKT1, AKT2, MAP2K1 and MAP2K7. Interacts with ATF4. Interacts with DDIT3/CHOP and inhibits its interaction with EP300/P300. Interacts with APOBEC3C. Interacts (via N-terminus) with APOBEC3A. Interacts with RELA. As to expression, highly expressed in liver. Not detected in heart, brain, spleen, lung, skeletal muscle, kidney or testis.

It localises to the nucleus. Functionally, inactive protein kinase which acts as a regulator of the integrated stress response (ISR), a process for adaptation to various stress. Inhibits the transcriptional activity of DDIT3/CHOP and is involved in DDIT3/CHOP-dependent cell death during ER stress. May play a role in programmed neuronal cell death but does not appear to affect non-neuronal cells. Acts as a negative feedback regulator of the ATF4-dependent transcription during the ISR: while TRIB3 expression is promoted by ATF4, TRIB3 protein interacts with ATF4 and inhibits ATF4 transcription activity. Disrupts insulin signaling by binding directly to Akt kinases and blocking their activation. May bind directly to and mask the 'Thr-308' phosphorylation site in AKT1. Interacts with the NF-kappa-B transactivator p65 RELA and inhibits its phosphorylation and thus its transcriptional activation activity. Interacts with MAPK kinases and regulates activation of MAP kinases. Can inhibit APOBEC3A editing of nuclear DNA. In Mus musculus (Mouse), this protein is Tribbles homolog 3 (Trib3).